Here is a 198-residue protein sequence, read N- to C-terminus: COMM domain-containing protein 9 (198 aa).

A2 is modified (N-acetylalanine). The region spanning 122–196 (RLVDLDWRVD…RIRDQLSAVA (75 aa)) is the COMM domain.

This sequence belongs to the COMM domain-containing protein 9 family. In terms of assembly, component of the commander complex consisting of the CCC subcomplex and the retriever subcomplex. Component of the CCC (COMMD/CCDC22/CCDC93) subcomplex consisting of COMMD1, COMMD2, COMMD3, COMMD4, COMMD5, COMMD6, COMMD7, COMMD8, COMMD9, COMMD10, CCDC22 and CCDC93; within the complex forms a heterodimer with COMMD7. Interacts with RELB and NFKB1/p105. Interacts with CCDC22, CCDC93, SCNN1B, CUL1. As to expression, ubiquitous.

The protein resides in the nucleus. Its subcellular location is the cytoplasmic vesicle. Functionally, scaffold protein in the commander complex that is essential for endosomal recycling of transmembrane cargos; the commander complex is composed of the CCC subcomplex and the retriever subcomplex. May modulate activity of cullin-RING E3 ubiquitin ligase (CRL) complexes. May down-regulate activation of NF-kappa-B. Modulates Na(+) transport in epithelial cells by regulation of apical cell surface expression of amiloride-sensitive sodium channel (ENaC) subunits. This chain is COMM domain-containing protein 9 (COMMD9), found in Homo sapiens (Human).